Reading from the N-terminus, the 889-residue chain is DNA gyrase subunit A (889 aa).

In terms of domain architecture, Topo IIA-type catalytic spans 35–501; the sequence is LPDVRDGLKP…GFEDLEDEDL (467 aa). Tyrosine 123 acts as the O-(5'-phospho-DNA)-tyrosine intermediate in catalysis. Positions 528–534 match the GyrA-box motif; it reads QNRGGRG. The tract at residues 811 to 889 is disordered; it reads KEDAEDETNE…IQQSLDEDEE (79 aa). Over residues 813-823 the composition is skewed to acidic residues; that stretch reads DAEDETNEDEQ. A compositionally biased stretch (basic and acidic residues) spans 863 to 875; the sequence is DGRIEVRQDFMDR. Acidic residues predominate over residues 876–889; the sequence is VEEDIQQSLDEDEE.

The protein belongs to the type II topoisomerase GyrA/ParC subunit family. As to quaternary structure, heterotetramer, composed of two GyrA and two GyrB chains. In the heterotetramer, GyrA contains the active site tyrosine that forms a transient covalent intermediate with DNA, while GyrB binds cofactors and catalyzes ATP hydrolysis.

It localises to the cytoplasm. It catalyses the reaction ATP-dependent breakage, passage and rejoining of double-stranded DNA.. A type II topoisomerase that negatively supercoils closed circular double-stranded (ds) DNA in an ATP-dependent manner to modulate DNA topology and maintain chromosomes in an underwound state. Negative supercoiling favors strand separation, and DNA replication, transcription, recombination and repair, all of which involve strand separation. Also able to catalyze the interconversion of other topological isomers of dsDNA rings, including catenanes and knotted rings. Type II topoisomerases break and join 2 DNA strands simultaneously in an ATP-dependent manner. The sequence is that of DNA gyrase subunit A from Staphylococcus aureus.